A 469-amino-acid polypeptide reads, in one-letter code: Glutamate--tRNA ligase (469 aa).

The 'HIGH' region motif lies at 9 to 19 (PSPTGFLHVGG). Cysteine 98, cysteine 100, cysteine 125, and aspartate 127 together coordinate Zn(2+). The 'KMSKS' region signature appears at 236-240 (KLSKR). Lysine 239 is a binding site for ATP.

The protein belongs to the class-I aminoacyl-tRNA synthetase family. Glutamate--tRNA ligase type 1 subfamily. In terms of assembly, monomer. Zn(2+) serves as cofactor.

The protein resides in the cytoplasm. The enzyme catalyses tRNA(Glu) + L-glutamate + ATP = L-glutamyl-tRNA(Glu) + AMP + diphosphate. In terms of biological role, catalyzes the attachment of glutamate to tRNA(Glu) in a two-step reaction: glutamate is first activated by ATP to form Glu-AMP and then transferred to the acceptor end of tRNA(Glu). The protein is Glutamate--tRNA ligase of Shewanella woodyi (strain ATCC 51908 / MS32).